The primary structure comprises 144 residues: D-aminoacyl-tRNA deacylase (144 aa).

Positions 136-137 match the Gly-cisPro motif, important for rejection of L-amino acids motif; sequence GP.

This sequence belongs to the DTD family. Homodimer.

The protein localises to the cytoplasm. It carries out the reaction glycyl-tRNA(Ala) + H2O = tRNA(Ala) + glycine + H(+). The catalysed reaction is a D-aminoacyl-tRNA + H2O = a tRNA + a D-alpha-amino acid + H(+). An aminoacyl-tRNA editing enzyme that deacylates mischarged D-aminoacyl-tRNAs. Also deacylates mischarged glycyl-tRNA(Ala), protecting cells against glycine mischarging by AlaRS. Acts via tRNA-based rather than protein-based catalysis; rejects L-amino acids rather than detecting D-amino acids in the active site. By recycling D-aminoacyl-tRNA to D-amino acids and free tRNA molecules, this enzyme counteracts the toxicity associated with the formation of D-aminoacyl-tRNA entities in vivo and helps enforce protein L-homochirality. The protein is D-aminoacyl-tRNA deacylase of Haemophilus influenzae (strain 86-028NP).